The primary structure comprises 463 residues: MSKSNGVSLAFPAEAATKEYAASLDSSDRLAAFREKFIVPSKANIASKKLAKPGLSPESCIYFCGNSLGIQPKATAKYLEAQLDTWSSIGVGGHFTDLEGSPLKQWQLLSEQAADSMSKIVGAKPEEVAAMGTLTTNLHLLLASFYKPTQTKHKILMDWKAFPSDHYAIESHIAWHDLDPKESMVLIGPDEGEYEISTQKIFSYIDKHADEAAMILLPGIQYYTGQLFDIQKITKYAHSRNMVVGWDLAHAFANVELKLHDWNVDFAAWCTYKYGNAGPGAMGGLFVHEQHGEVDYSAGEDAPKFRHRLTGWYGGDRSVRFKMDNKFKPIPGAGGFQISNPSAIDLACLCAALSVFDETSMADLRRKSLKLTAYLEFLLLRDYEEESRPFSIITPKDPEARGAQLSLLLKPGLLQNVAQKLQEAGIVCDKREPGVVRVAPVPLYNSFSEVWTFVKIFKDALQQ.

Pyridoxal 5'-phosphate-binding positions include L134, T135, 162-165, D247, H250, and Y272; that span reads FPSD. K273 carries the post-translational modification N6-(pyridoxal phosphate)lysine. W312 and N340 together coordinate pyridoxal 5'-phosphate.

This sequence belongs to the kynureninase family. Homodimer. Requires pyridoxal 5'-phosphate as cofactor.

It localises to the cytoplasm. It catalyses the reaction L-kynurenine + H2O = anthranilate + L-alanine + H(+). The catalysed reaction is 3-hydroxy-L-kynurenine + H2O = 3-hydroxyanthranilate + L-alanine + H(+). The protein operates within amino-acid degradation; L-kynurenine degradation; L-alanine and anthranilate from L-kynurenine: step 1/1. It functions in the pathway cofactor biosynthesis; NAD(+) biosynthesis; quinolinate from L-kynurenine: step 2/3. In terms of biological role, catalyzes the cleavage of L-kynurenine (L-Kyn) and L-3-hydroxykynurenine (L-3OHKyn) into anthranilic acid (AA) and 3-hydroxyanthranilic acid (3-OHAA), respectively. The protein is Kynureninase 2 (bna5-2) of Aspergillus niger (strain ATCC MYA-4892 / CBS 513.88 / FGSC A1513).